Consider the following 148-residue polypeptide: Photosystem II extrinsic protein U, chloroplastic (148 aa).

A chloroplast-targeting transit peptide spans 1–32 (MKLAVFAVLISTVAAFVAPNGVQRAATTELNA). A thylakoid-targeting transit peptide spans 33 to 54 (ERREFLSAAAVAAGLAFPLTAN).

This sequence belongs to the PsbU family. In terms of assembly, PSII is composed of 1 copy each of membrane proteins PsbA, PsbB, PsbC, PsbD, PsbE, PsbF, PsbH, PsbI, PsbJ, PsbK, PsbL, PsbM, PsbT, PsbX, PsbY, PsbZ, Psb30/Ycf12, at least 3 peripheral proteins of the oxygen-evolving complex and a large number of cofactors. It forms dimeric complexes. The oxygen-evolving complex may be composed of PsbO, PsbQ', PsbV and PsbU.

The protein localises to the plastid. The protein resides in the chloroplast thylakoid membrane. Functionally, one of the extrinsic, lumenal subunits of photosystem II (PSII), which stabilize and protect the oxygen-evolving complex. PSII is a light-driven water plastoquinone oxidoreductase, using light energy to abstract electrons from H(2)O, generating a proton gradient subsequently used for ATP formation. Stabilizes the structure of photosystem II oxygen-evolving complex (OEC), the ion environment of oxygen evolution and protects the OEC against heat-induced inactivation. This chain is Photosystem II extrinsic protein U, chloroplastic, found in Phaeodactylum tricornutum (Diatom).